A 330-amino-acid chain; its full sequence is Probable integrase/recombinase protein MJ0367 (330 aa).

Residues 22–112 form the Core-binding (CB) domain; it reads IEETDKIKEY…LLKVFYRVLR (91 aa). The region spanning 136–325 is the Tyr recombinase domain; the sequence is QHYDAVDAEM…RAESLEFIKK (190 aa). Active-site residues include arginine 177, lysine 202, histidine 275, arginine 278, and histidine 301. The active-site O-(3'-phospho-DNA)-tyrosine intermediate is the tyrosine 310.

It belongs to the 'phage' integrase family.

The polypeptide is Probable integrase/recombinase protein MJ0367 (Methanocaldococcus jannaschii (strain ATCC 43067 / DSM 2661 / JAL-1 / JCM 10045 / NBRC 100440) (Methanococcus jannaschii)).